The sequence spans 1597 residues: Mitogen-activated protein kinase kinase kinase 4 (1597 aa).

Disordered regions lie at residues 1 to 128 (MRDA…VETV) and 424 to 465 (SPRP…PRVP). Over residues 59–69 (SDPEDFSDETN) the composition is skewed to acidic residues. Serine 77 carries the phosphoserine modification. A compositionally biased stretch (basic residues) spans 84-94 (QMKRLSAKHQR). Phosphoserine is present on serine 424. Phosphothreonine is present on threonine 440. Serine 449 carries the post-translational modification Phosphoserine. Over residues 449-458 (SGTEESDEEP) the composition is skewed to acidic residues. Phosphothreonine is present on threonine 451. A phosphoserine mark is found at serine 454 and serine 492. Disordered regions lie at residues 1137 to 1157 (RPVK…IIPT), 1190 to 1220 (AAGR…SVPE), and 1233 to 1263 (FRSL…TRRS). Over residues 1210–1219 (APDTRGSSVP) the composition is skewed to polar residues. Phosphoserine is present on residues serine 1241 and serine 1263. Residues 1241–1250 (SPTEERDEPA) are compositionally biased toward basic and acidic residues. Positions 1332–1590 (WQRGNKIGEG…ASQLLDHAFV (259 aa)) constitute a Protein kinase domain. Residues 1338-1346 (IGEGQYGKV) and lysine 1361 each bind ATP. Residue aspartate 1452 is the Proton acceptor of the active site.

This sequence belongs to the protein kinase superfamily. STE Ser/Thr protein kinase family. MAP kinase kinase kinase subfamily. As to quaternary structure, monomer and homodimer. Homodimerization enhances kinase activity. Interacts with CDC42. Interacts with TRAF4; this promotes homodimerization. Binds both upstream activators and downstream substrates in multimolecular complexes. Interacts with AXIN1 and DIXDC1; interaction with DIXDC1 prevents interaction with AXIN1. Interacts with GADD45 and MAP2K6. Interacts with ZFP36; this interaction enhances the association with SH3KBP1/CIN85. Interacts with SH3KBP1; this interaction enhances the association with ZFP36. The cofactor is Mg(2+). In terms of tissue distribution, widely expressed. High expression was found in skeletal muscle, kidney, testis followed by heart brain and lung. Low expression was found in spleen.

It localises to the cytoplasm. The protein resides in the perinuclear region. It catalyses the reaction L-seryl-[protein] + ATP = O-phospho-L-seryl-[protein] + ADP + H(+). It carries out the reaction L-threonyl-[protein] + ATP = O-phospho-L-threonyl-[protein] + ADP + H(+). N-terminal autoinhibitory domain interacts with the C-terminal kinase domain, inhibiting kinase activity, and preventing interaction with its substrate, MAP2K6. The GADD45 proteins activate the kinase by binding to the N-terminal domain. Activated by phosphorylation on Thr-1494. Functionally, component of a protein kinase signal transduction cascade. Activates the CSBP2, P38 and JNK MAPK pathways, but not the ERK pathway. Specifically phosphorylates and activates MAP2K4 and MAP2K6. The chain is Mitogen-activated protein kinase kinase kinase 4 (Map3k4) from Mus musculus (Mouse).